A 689-amino-acid polypeptide reads, in one-letter code: Glycine--tRNA ligase beta subunit (689 aa).

This sequence belongs to the class-II aminoacyl-tRNA synthetase family. In terms of assembly, tetramer of two alpha and two beta subunits.

It is found in the cytoplasm. It catalyses the reaction tRNA(Gly) + glycine + ATP = glycyl-tRNA(Gly) + AMP + diphosphate. The protein is Glycine--tRNA ligase beta subunit of Dictyoglomus turgidum (strain DSM 6724 / Z-1310).